The chain runs to 292 residues: Lyso-ornithine lipid O-acyltransferase (292 aa).

Residues 11–31 (GMLLVMVSLVLMPVQILCLWL) form a helical membrane-spanning segment. A disordered region spans residues 258-292 (RLRGRSRSAAKGEPAPACSAAPDIPSDAQRSRLAP).

It belongs to the 1-acyl-sn-glycerol-3-phosphate acyltransferase family. OlsA subfamily.

Its subcellular location is the membrane. It carries out the reaction a lyso-ornithine lipid + a fatty acyl-[ACP] = an N(2)-[(3R)-3-(acyloxy)acyl]-L-ornithine lipid + holo-[ACP]. It functions in the pathway lipid metabolism. In terms of biological role, catalyzes the second step in the formation of ornithine lipids, which are phosphorus-free membrane lipids. Uses acyl-acyl carrier protein (acyl-AcpP) as an acyl donor and converts lyso-ornithine lipid (LOL) into ornithine lipid (OL). The sequence is that of Lyso-ornithine lipid O-acyltransferase from Rhizobium meliloti (strain 1021) (Ensifer meliloti).